A 56-amino-acid chain; its full sequence is UPF0391 membrane protein Jann_3570 (56 aa).

A run of 2 helical transmembrane segments spans residues 4–24 (WAVT…GGIA) and 29–48 (GIAQ…SLVA).

This sequence belongs to the UPF0391 family.

The protein resides in the cell membrane. The polypeptide is UPF0391 membrane protein Jann_3570 (Jannaschia sp. (strain CCS1)).